Consider the following 755-residue polypeptide: Polyribonucleotide nucleotidyltransferase (755 aa).

Mg(2+) is bound by residues Asp-493 and Asp-499. A KH domain is found at 560–619; the sequence is PRIMTIQIPVDKIGALIGPGGKTIRNICETTGAQIDIEDDGRVFITTPDGAAARQAISMI. Positions 629 to 698 constitute an S1 motif domain; it reads GDIFLGKVVS…TTGKISLSRR (70 aa). The disordered stretch occupies residues 699–755; that stretch reads AVLTGETPEERKAAGAAPRPRPREEQRGGRDEPRSLRDELRGPRREGDRPRPRRRDD. Basic and acidic residues predominate over residues 719–755; the sequence is RPREEQRGGRDEPRSLRDELRGPRREGDRPRPRRRDD.

The protein belongs to the polyribonucleotide nucleotidyltransferase family. The cofactor is Mg(2+).

It is found in the cytoplasm. The catalysed reaction is RNA(n+1) + phosphate = RNA(n) + a ribonucleoside 5'-diphosphate. Its function is as follows. Involved in mRNA degradation. Catalyzes the phosphorolysis of single-stranded polyribonucleotides processively in the 3'- to 5'-direction. The polypeptide is Polyribonucleotide nucleotidyltransferase (Chloroflexus aurantiacus (strain ATCC 29366 / DSM 635 / J-10-fl)).